The primary structure comprises 318 residues: NADH-ubiquinone oxidoreductase chain 1 (318 aa).

Helical transmembrane passes span 3 to 23 (LINL…LTLL), 69 to 89 (MLFI…WTPL), 102 to 122 (MLFI…SGWA), 144 to 164 (VTLA…TLLS), 171 to 191 (YIWL…STLA), 222 to 242 (LFFL…IILF), 253 to 273 (ELYT…FLWI), and 294 to 314 (LPLT…LAGI).

This sequence belongs to the complex I subunit 1 family. In terms of assembly, core subunit of respiratory chain NADH dehydrogenase (Complex I) which is composed of 45 different subunits.

It localises to the mitochondrion inner membrane. The enzyme catalyses a ubiquinone + NADH + 5 H(+)(in) = a ubiquinol + NAD(+) + 4 H(+)(out). Core subunit of the mitochondrial membrane respiratory chain NADH dehydrogenase (Complex I) which catalyzes electron transfer from NADH through the respiratory chain, using ubiquinone as an electron acceptor. Essential for the catalytic activity and assembly of complex I. The protein is NADH-ubiquinone oxidoreductase chain 1 (MT-ND1) of Murina florium (Flores tube-nosed bat).